The primary structure comprises 121 residues: Small ribosomal subunit protein uS12c (121 aa).

Belongs to the universal ribosomal protein uS12 family. In terms of assembly, part of the 30S ribosomal subunit.

It is found in the plastid. Its subcellular location is the apicoplast. With S4 and S5 plays an important role in translational accuracy. Located at the interface of the 30S and 50S subunits. The sequence is that of Small ribosomal subunit protein uS12c (rps12) from Toxoplasma gondii.